The following is a 495-amino-acid chain: Alpha-1B-glycoprotein (495 aa).

The N-terminal stretch at 1-21 is a signal peptide; the sequence is MSMLVVFLLLWGVTWGPVTEA. Ig-like V-type domains are found at residues 22 to 113, 114 to 206, 207 to 299, 300 to 397, and 398 to 495; these read AIFY…LTGP, KSLP…ELAA, PPPP…PVEL, ILSD…LHVD, and GPPP…VAES. A glycan (N-linked (GlcNAc...) (complex) asparagine) is linked at N44. 5 disulfides stabilise this stretch: C49–C93, C139–C182, C232–C279, C325–C374, and C423–C470. A glycan (N-linked (GlcNAc...) asparagine) is linked at N179. N-linked (GlcNAc...) asparagine glycosylation is found at N363 and N371.

In terms of assembly, interacts with CRISP3. As to expression, plasma.

Its subcellular location is the secreted. This Homo sapiens (Human) protein is Alpha-1B-glycoprotein (A1BG).